Here is an 865-residue protein sequence, read N- to C-terminus: Protein translocase subunit SecA (865 aa).

ATP-binding positions include Gln-93, 111–115 (GEGKT), and Asp-501. Zn(2+)-binding residues include Cys-841, Cys-843, Cys-852, and Cys-853.

This sequence belongs to the SecA family. Monomer and homodimer. Part of the essential Sec protein translocation apparatus which comprises SecA, SecYEG and auxiliary proteins SecDF-YajC and YidC. Zn(2+) is required as a cofactor.

The protein resides in the cell inner membrane. It localises to the cytoplasm. It catalyses the reaction ATP + H2O + cellular proteinSide 1 = ADP + phosphate + cellular proteinSide 2.. Its function is as follows. Part of the Sec protein translocase complex. Interacts with the SecYEG preprotein conducting channel. Has a central role in coupling the hydrolysis of ATP to the transfer of proteins into and across the cell membrane, serving as an ATP-driven molecular motor driving the stepwise translocation of polypeptide chains across the membrane. This chain is Protein translocase subunit SecA, found in Helicobacter acinonychis (strain Sheeba).